A 238-amino-acid polypeptide reads, in one-letter code: Dof zinc finger protein MNB1A (238 aa).

The segment covering 1–13 (MQEASSAAAAGAE) has biased composition (low complexity). A disordered region spans residues 1-48 (MQEASSAAAAGAEPGRRAAQHQFAGVDLRRPKGYAAPAPAPAVGEGDP). A Dof-type zinc finger spans residues 47 to 101 (DPCPRCASRDTKFCYYNNYNTSQPRHFCKGCRRYWTKGGTLRNVPVGGGTRKKPS). Residues Cys-49, Cys-52, Cys-74, and Cys-77 each contribute to the Zn(2+) site. Residues 85-155 (GTLRNVPVGG…TATTTTTTSE (71 aa)) are disordered. The segment covering 119–130 (PKKKPASKKRRV) has biased composition (basic residues). Residues 138–155 (ATAADPGKTATTTTTTSE) show a composition bias toward low complexity.

Expressed in all tissues examined.

Its subcellular location is the nucleus. In terms of biological role, transcription factor that binds specifically to a 5'-AA[AG]G-3' consensus core sequence at the MNF1-binding site. The sequence is that of Dof zinc finger protein MNB1A (MNB1A) from Zea mays (Maize).